The sequence spans 112 residues: Cytochrome c3 (112 aa).

16 residues coordinate heme c: His26, His29, Cys34, Cys37, His38, His39, Cys49, Cys54, His55, His73, Cys83, Cys86, His87, Cys104, Cys109, and His110.

Heme serves as cofactor.

Participates in sulfate respiration coupled with phosphorylation by transferring electrons from the enzyme dehydrogenase to ferredoxin. The protein is Cytochrome c3 of Megalodesulfovibrio gigas (strain ATCC 19364 / DSM 1382 / NCIMB 9332 / VKM B-1759) (Desulfovibrio gigas).